The primary structure comprises 1543 residues: DNA-directed RNA polymerase subunit beta' (1543 aa).

Zn(2+) contacts are provided by Cys60, Cys62, Cys75, and Cys78. Positions 627, 629, and 631 each coordinate Mg(2+). Cys1017, Cys1097, Cys1104, and Cys1107 together coordinate Zn(2+). Disordered regions lie at residues 1466 to 1490 (PADR…APPR) and 1522 to 1543 (AEEG…EENV).

Belongs to the RNA polymerase beta' chain family. In terms of assembly, the RNAP catalytic core consists of 2 alpha, 1 beta, 1 beta' and 1 omega subunit. When a sigma factor is associated with the core the holoenzyme is formed, which can initiate transcription. Mg(2+) is required as a cofactor. Zn(2+) serves as cofactor.

The catalysed reaction is RNA(n) + a ribonucleoside 5'-triphosphate = RNA(n+1) + diphosphate. In terms of biological role, DNA-dependent RNA polymerase catalyzes the transcription of DNA into RNA using the four ribonucleoside triphosphates as substrates. This Herpetosiphon aurantiacus (strain ATCC 23779 / DSM 785 / 114-95) protein is DNA-directed RNA polymerase subunit beta'.